A 227-amino-acid chain; its full sequence is uncharacterized protein (227 aa).

Transmembrane regions (helical) follow at residues 109–128 (MCNVGLVLMMVFAAFYFAGI), 173–192 (AILLSVTLLALTPVIGILLT), and 199–221 (ALRVIFLVIAVEFVYAIFRVMMG).

It localises to the cell membrane. This is an uncharacterized protein from Archaeoglobus fulgidus (strain ATCC 49558 / DSM 4304 / JCM 9628 / NBRC 100126 / VC-16).